The following is a 476-amino-acid chain: uncharacterized protein (476 aa).

Positions 147-204 form a coiled coil; that stretch reads DVRLAELRRRRAELEAEIAAVEAGDIAVLDPTAVRDRYQQLSTTARELLSDFREVEEN.

This is an uncharacterized protein from Mycolicibacterium smegmatis (strain ATCC 700084 / mc(2)155) (Mycobacterium smegmatis).